Reading from the N-terminus, the 258-residue chain is uncharacterized protein (258 aa).

The N-terminal stretch at 1–20 is a signal peptide; it reads MKCFQKLYIFILILIVLMAG. A lipid anchor (N-palmitoyl cysteine) is attached at Cys21. Residue Cys21 is the site of S-diacylglycerol cysteine attachment.

It belongs to the staphylococcal tandem lipoprotein family.

It localises to the cell membrane. This is an uncharacterized protein from Staphylococcus aureus (strain bovine RF122 / ET3-1).